The following is a 1074-amino-acid chain: BRD4-interacting chromatin-remodeling complex-associated protein-like (1074 aa).

4 disordered regions span residues 542–603, 620–689, 834–874, and 887–952; these read AVSS…NTPG, TSPI…GQKR, TPLD…HDQF, and GNIS…SKLP. Composition is skewed to polar residues over residues 544 to 576, 591 to 603, 620 to 629, and 660 to 680; these read SSAS…QANR, ASKS…NTPG, TSPIPTSKTT, and GATQ…TAVQ. Position 621 is a phosphoserine (S621). Basic and acidic residues-rich tracts occupy residues 889–904, 913–925, and 934–948; these read ISKK…KFDR, PPED…DPAK, and EGHR…HGSE. S976 carries the phosphoserine modification.

Component of the multiprotein chromatin-remodeling complexes SWI/SNF: SWI/SNF-A (BAF), SWI/SNF-B (PBAF) and related complexes. The canonical complex contains a catalytic subunit (either SMARCA4/BRG1/BAF190A or SMARCA2/BRM/BAF190B) and at least SMARCE1, ACTL6A/BAF53, SMARCC1/BAF155, SMARCC2/BAF170, and SMARCB1/SNF5/BAF47. Other subunits specific to each of the complexes may also be present permitting several possible combinations developmentally and tissue specific. Component of the SWI/SNF (GBAF) subcomplex, which includes at least BICRA or BICRAL (mutually exclusive), BRD9, SS18, the core BAF subunits, SMARCA2/BRM, SMARCA4/BRG1/BAF190A, ACTL6A/BAF53, SMARCC1/BAF155, and SMARCD1/BAF60A.

Its function is as follows. Component of SWI/SNF chromatin remodeling subcomplex GBAF that carries out key enzymatic activities, changing chromatin structure by altering DNA-histone contacts within a nucleosome in an ATP-dependent manner. This is BRD4-interacting chromatin-remodeling complex-associated protein-like from Mus musculus (Mouse).